Here is a 262-residue protein sequence, read N- to C-terminus: Adenosylcobinamide-GDP ribazoletransferase (262 aa).

5 helical membrane passes run 41 to 61, 65 to 85, 115 to 132, 134 to 156, and 195 to 215; these read AFPL…FILG, ASSL…TGAL, IGTY…LRVS, LAAF…TAAL, and GVLL…AVWL.

The protein belongs to the CobS family. It depends on Mg(2+) as a cofactor.

Its subcellular location is the cell inner membrane. It catalyses the reaction alpha-ribazole + adenosylcob(III)inamide-GDP = adenosylcob(III)alamin + GMP + H(+). The catalysed reaction is alpha-ribazole 5'-phosphate + adenosylcob(III)inamide-GDP = adenosylcob(III)alamin 5'-phosphate + GMP + H(+). The protein operates within cofactor biosynthesis; adenosylcobalamin biosynthesis; adenosylcobalamin from cob(II)yrinate a,c-diamide: step 7/7. Its function is as follows. Joins adenosylcobinamide-GDP and alpha-ribazole to generate adenosylcobalamin (Ado-cobalamin). Also synthesizes adenosylcobalamin 5'-phosphate from adenosylcobinamide-GDP and alpha-ribazole 5'-phosphate. The chain is Adenosylcobinamide-GDP ribazoletransferase from Rhizobium meliloti (strain 1021) (Ensifer meliloti).